The primary structure comprises 427 residues: Phosphoribosylamine--glycine ligase (427 aa).

The ATP-grasp domain occupies 110 to 315 (KDFCQRHGLP…IVPILLAAAK (206 aa)). 136–196 (LDTLEAPFVI…EEFMHGEEAS (61 aa)) contacts ATP. Residues E285 and N287 each contribute to the Mg(2+) site.

It belongs to the GARS family. Requires Mg(2+) as cofactor. Mn(2+) serves as cofactor.

It carries out the reaction 5-phospho-beta-D-ribosylamine + glycine + ATP = N(1)-(5-phospho-beta-D-ribosyl)glycinamide + ADP + phosphate + H(+). The protein operates within purine metabolism; IMP biosynthesis via de novo pathway; N(1)-(5-phospho-D-ribosyl)glycinamide from 5-phospho-alpha-D-ribose 1-diphosphate: step 2/2. This is Phosphoribosylamine--glycine ligase from Caulobacter vibrioides (strain ATCC 19089 / CIP 103742 / CB 15) (Caulobacter crescentus).